Reading from the N-terminus, the 171-residue chain is Adenine phosphoribosyltransferase (171 aa).

This sequence belongs to the purine/pyrimidine phosphoribosyltransferase family. As to quaternary structure, homodimer.

Its subcellular location is the cytoplasm. The catalysed reaction is AMP + diphosphate = 5-phospho-alpha-D-ribose 1-diphosphate + adenine. It functions in the pathway purine metabolism; AMP biosynthesis via salvage pathway; AMP from adenine: step 1/1. In terms of biological role, catalyzes a salvage reaction resulting in the formation of AMP, that is energically less costly than de novo synthesis. This Geotalea daltonii (strain DSM 22248 / JCM 15807 / FRC-32) (Geobacter daltonii) protein is Adenine phosphoribosyltransferase.